The chain runs to 448 residues: SET domain-containing protein SmydA-8, isoform B (448 aa).

An SET domain is found at 42 to 273 (PSWRVADSPI…AGAEITMSYA (232 aa)).

The protein belongs to the class V-like SAM-binding methyltransferase superfamily.

This is SET domain-containing protein SmydA-8, isoform B from Drosophila melanogaster (Fruit fly).